Consider the following 291-residue polypeptide: Inositol-1-monophosphatase (291 aa).

Residues Glu83, Asp104, Ile106, and Asp107 each coordinate Mg(2+). Position 83 (Glu83) interacts with substrate. Residues 106–109 (IDGT), Arg206, and Asp235 contribute to the substrate site. Asp235 contacts Mg(2+).

This sequence belongs to the inositol monophosphatase superfamily. Mg(2+) serves as cofactor.

The catalysed reaction is a myo-inositol phosphate + H2O = myo-inositol + phosphate. The chain is Inositol-1-monophosphatase (suhB) from Mycobacterium leprae (strain TN).